Consider the following 668-residue polypeptide: MDIPKNIKERYEKLKAEIEEHNYRYYVLADPIISDQEYDKLFKELVELEKKYPELKTPDSPTQRIGGIVVEGFNKVNHLIPMLSLDNTYNEEEILDFHKRVLKNLSLNHVEYFCELKIDGVSVALRYTDGVLTQAITRGDGTTGEDITQNVKTIPSIPLRLRENLTIEVRGEIYMPKKEFVRINSEREEKGLPVFANPRNATAGTLKLLDSTEVAKRKLSSFMYYVIFPQNYNLETQEEAINFLKEVGFRINPNYKNAQDIGQVIEFWKEWNRRRKELEYEVDGIVVKVNSFELQRLLGETARSPRWAIAFKFEAEQKETKLKAIKLQVGSTGIITPVAEFDPIQLEGTIVKRASLHNFDYLKERDIREGDYVLIEKAGGIIPQVIGPVKEKRTGEEKIIRPPEKCPVCGGKVGKIKSSEVAIRCLNPSCPEKLLRTLENFVSRNAMNIQGLGPKILKRMVDAGLLKDIADLYYLNEQKIRSLGEGIGDKTVENILTQIEQSKNRELDRLINALGIPNVGSKTAKDLANHFKNLDSLIDAKFDELVEIEGIGEDIANAIIKFFSQEEVKKIVKKLKDAGVNMGKKEEEKLEGPLKGLVICQTGALSKMTRQEFAEYVESKGGTFSENVTKKTNILVVGENPGSKLDKAQSYGITIMSEEEFFDKYGES.

Residues Asp-35–Asp-39, Ser-84–Leu-85, and Glu-115 contribute to the NAD(+) site. Catalysis depends on Lys-117, which acts as the N6-AMP-lysine intermediate. Residues Arg-138, Glu-172, Lys-288, and Lys-312 each coordinate NAD(+). Residues Cys-406, Cys-409, Cys-425, and Cys-430 each contribute to the Zn(2+) site. The BRCT domain occupies Lys-589–Ser-668.

Belongs to the NAD-dependent DNA ligase family. LigA subfamily. It depends on Mg(2+) as a cofactor. Mn(2+) is required as a cofactor.

The catalysed reaction is NAD(+) + (deoxyribonucleotide)n-3'-hydroxyl + 5'-phospho-(deoxyribonucleotide)m = (deoxyribonucleotide)n+m + AMP + beta-nicotinamide D-nucleotide.. DNA ligase that catalyzes the formation of phosphodiester linkages between 5'-phosphoryl and 3'-hydroxyl groups in double-stranded DNA using NAD as a coenzyme and as the energy source for the reaction. It is essential for DNA replication and repair of damaged DNA. The sequence is that of DNA ligase from Petrotoga mobilis (strain DSM 10674 / SJ95).